Consider the following 100-residue polypeptide: Putative ESAT-6-like protein Y (100 aa).

The protein belongs to the WXG100 family.

The polypeptide is Putative ESAT-6-like protein Y (Mycobacterium leprae (strain TN)).